A 79-amino-acid polypeptide reads, in one-letter code: MSSQQQQRQQQQCPPQRAQQQQVKQPCQPPPVKCQETCAPKTKDPCAPQVKKQCPPKGTIIPAQQKCPSAQQASKSKQK.

Residues 1-26 (MSSQQQQRQQQQCPPQRAQQQQVKQP) are compositionally biased toward low complexity. Residues 1–79 (MSSQQQQRQQ…AQQASKSKQK (79 aa)) form a disordered region. The segment covering 66 to 79 (KCPSAQQASKSKQK) has biased composition (polar residues).

Belongs to the cornifin (SPRR) family. In terms of processing, cross-linked to membrane proteins by transglutaminase.

The protein localises to the cytoplasm. The protein resides in the cell cortex. Functionally, cross-linked envelope protein of keratinocytes. Involved in UV-induced cornification. The protein is Small proline-rich protein 4 (SPRR4) of Homo sapiens (Human).